Consider the following 866-residue polypeptide: Protein translocase subunit SecA (866 aa).

ATP contacts are provided by residues Gln-87, Gly-105–Thr-109, and Asp-514. Positions Val-819 to Tyr-858 are disordered. Zn(2+)-binding residues include Cys-850, Cys-852, Cys-861, and Cys-862.

Belongs to the SecA family. As to quaternary structure, monomer and homodimer. Part of the essential Sec protein translocation apparatus which comprises SecA, SecYEG and auxiliary proteins SecDF. Other proteins may also be involved. Zn(2+) is required as a cofactor.

The protein resides in the cell inner membrane. Its subcellular location is the cytoplasm. The enzyme catalyses ATP + H2O + cellular proteinSide 1 = ADP + phosphate + cellular proteinSide 2.. Part of the Sec protein translocase complex. Interacts with the SecYEG preprotein conducting channel. Has a central role in coupling the hydrolysis of ATP to the transfer of proteins into and across the cell membrane, serving as an ATP-driven molecular motor driving the stepwise translocation of polypeptide chains across the membrane. This is Protein translocase subunit SecA from Elusimicrobium minutum (strain Pei191).